We begin with the raw amino-acid sequence, 142 residues long: Hemoglobin subunit alpha-1 (142 aa).

The Globin domain maps to 2 to 142 (LLSADDKKHI…VSSVLTSKYR (141 aa)). O2 is bound at residue histidine 59. Histidine 88 is a heme b binding site.

Belongs to the globin family. Heterotetramer of two alpha chains and two beta chains. Red blood cells.

Involved in oxygen transport from the lung to the various peripheral tissues. This Xenopus borealis (Kenyan clawed frog) protein is Hemoglobin subunit alpha-1 (hba1).